The following is a 110-amino-acid chain: Large ribosomal subunit protein uL24 (110 aa).

It belongs to the universal ribosomal protein uL24 family. Part of the 50S ribosomal subunit.

Functionally, one of two assembly initiator proteins, it binds directly to the 5'-end of the 23S rRNA, where it nucleates assembly of the 50S subunit. One of the proteins that surrounds the polypeptide exit tunnel on the outside of the subunit. The sequence is that of Large ribosomal subunit protein uL24 from Caldicellulosiruptor saccharolyticus (strain ATCC 43494 / DSM 8903 / Tp8T 6331).